Consider the following 476-residue polypeptide: uncharacterized protein (476 aa).

Residues 147–204 (DVRLAELRRRRAELEAEIAAVEAGDIAVLDPTAVRDRYQQLSTTARELLSDFREVEEN) adopt a coiled-coil conformation.

This is an uncharacterized protein from Mycolicibacterium smegmatis (strain ATCC 700084 / mc(2)155) (Mycobacterium smegmatis).